The chain runs to 428 residues: Putative zinc metalloprotease SA1105 (428 aa).

Position 21 (His21) interacts with Zn(2+). Glu22 is a catalytic residue. His25 provides a ligand contact to Zn(2+). The next 4 membrane-spanning stretches (helical) occupy residues 172 to 194, 309 to 331, 352 to 374, and 401 to 420; these read FLTL…IGLA, GSTL…GFSF, IISL…LIPI, and TTII…LVTW. The 84-residue stretch at 186-269 folds into the PDZ domain; it reads ALVLFIGLAY…TKSVELTPKK (84 aa).

Belongs to the peptidase M50B family. The cofactor is Zn(2+).

The protein localises to the cell membrane. The protein is Putative zinc metalloprotease SA1105 of Staphylococcus aureus (strain N315).